A 329-amino-acid chain; its full sequence is Phosphoenolpyruvate transferase (329 aa).

Asp-61 lines the 7,8-didemethyl-8-hydroxy-5-deazariboflavin pocket.

This sequence belongs to the CofD family. Homodimer. Mg(2+) serves as cofactor.

The catalysed reaction is enolpyruvoyl-2-diphospho-5'-guanosine + 7,8-didemethyl-8-hydroxy-5-deazariboflavin = dehydro coenzyme F420-0 + GMP + H(+). It participates in cofactor biosynthesis; coenzyme F420 biosynthesis. Its function is as follows. Catalyzes the transfer of the phosphoenolpyruvate moiety from enoylpyruvoyl-2-diphospho-5'-guanosine (EPPG) to 7,8-didemethyl-8-hydroxy-5-deazariboflavin (FO) with the formation of dehydro coenzyme F420-0 and GMP. The sequence is that of Phosphoenolpyruvate transferase from Mycobacterium ulcerans (strain Agy99).